The sequence spans 155 residues: Regulatory protein RecX (155 aa).

The protein belongs to the RecX family.

The protein resides in the cytoplasm. Functionally, modulates RecA activity. The polypeptide is Regulatory protein RecX (Pseudomonas fluorescens (strain SBW25)).